The following is a 232-amino-acid chain: Gene 65 protein (232 aa).

This chain is Gene 65 protein (65), found in Mycobacterium phage D29 (Mycobacteriophage D29).